The primary structure comprises 158 residues: MRIGYGYDSHAFAENRKLILSGIEIPYELGLKGHSDADAVIHALIDSILGALALGDIGSHFPDNDSKYKGISSIVLLEKTVSIMEEKNYEISNTDITIILEKPKLRNYIDTMRENLSKILKTDIENVSIKAKTNEKMDSIGRGEGIAVHCVSLLKKTK.

Residues D8 and H10 each coordinate a divalent metal cation. Residues 8–10 (DSH) and 34–35 (HS) contribute to the 4-CDP-2-C-methyl-D-erythritol 2-phosphate site. A divalent metal cation is bound at residue H42. Residues 56–58 (DIG), 61–65 (FPDND), and R142 each bind 4-CDP-2-C-methyl-D-erythritol 2-phosphate.

The protein belongs to the IspF family. Homotrimer. A divalent metal cation is required as a cofactor.

The enzyme catalyses 4-CDP-2-C-methyl-D-erythritol 2-phosphate = 2-C-methyl-D-erythritol 2,4-cyclic diphosphate + CMP. Its pathway is isoprenoid biosynthesis; isopentenyl diphosphate biosynthesis via DXP pathway; isopentenyl diphosphate from 1-deoxy-D-xylulose 5-phosphate: step 4/6. In terms of biological role, involved in the biosynthesis of isopentenyl diphosphate (IPP) and dimethylallyl diphosphate (DMAPP), two major building blocks of isoprenoid compounds. Catalyzes the conversion of 4-diphosphocytidyl-2-C-methyl-D-erythritol 2-phosphate (CDP-ME2P) to 2-C-methyl-D-erythritol 2,4-cyclodiphosphate (ME-CPP) with a corresponding release of cytidine 5-monophosphate (CMP). In Brachyspira hyodysenteriae (strain ATCC 49526 / WA1), this protein is 2-C-methyl-D-erythritol 2,4-cyclodiphosphate synthase.